Reading from the N-terminus, the 525-residue chain is BTB/POZ domain-containing protein At1g50280 (525 aa).

The region spanning 5–79 is the BTB domain; sequence NDLKINLNGQ…CYHNGEILID (75 aa). Positions 200-466 constitute an NPH3 domain; it reads EWWFEDMTNL…IEALKSRCGN (267 aa).

This sequence belongs to the NPH3 family.

The protein operates within protein modification; protein ubiquitination. Functionally, may act as a substrate-specific adapter of an E3 ubiquitin-protein ligase complex (CUL3-RBX1-BTB) which mediates the ubiquitination and subsequent proteasomal degradation of target proteins. The chain is BTB/POZ domain-containing protein At1g50280 from Arabidopsis thaliana (Mouse-ear cress).